Reading from the N-terminus, the 556-residue chain is Cell wall integrity and stress response component 3 (556 aa).

Residues 1 to 38 (MERVWFAKLTNKGTIKIGYISFILLSLLCQSLIGLVNA) form the signal peptide. One can recognise a WSC domain in the interval 39 to 132 (DFNYEGCYSA…SSYMNVYVNA (94 aa)). At 39 to 384 (DFNYEGCYSA…QRLSGGAIAG (346 aa)) the chain is on the extracellular side. Asn-84 carries an N-linked (GlcNAc...) asparagine glycan. Composition is skewed to low complexity over residues 142 to 169 (SSSK…SSTT) and 184 to 257 (TTVS…STTS). Disordered stretches follow at residues 142-257 (SSSK…STTS) and 269-312 (TLSS…PSTS). Residues Asn-367 and Asn-370 are each glycosylated (N-linked (GlcNAc...) asparagine). A helical membrane pass occupies residues 385–405 (IVIGVVFGVIFIILILLFLIW). Over 406-556 (RRRKSHDQLD…LSSTVSHNRA (151 aa)) the chain is Cytoplasmic. Disordered stretches follow at residues 425 to 444 (YSFG…SGTT) and 534 to 556 (LQVV…HNRA). Residues 546-556 (ELSSTVSHNRA) are compositionally biased toward polar residues.

The protein resides in the membrane. This chain is Cell wall integrity and stress response component 3 (WSC3), found in Saccharomyces cerevisiae (strain ATCC 204508 / S288c) (Baker's yeast).